The following is an 89-amino-acid chain: Small ribosomal subunit protein uS15 (89 aa).

It belongs to the universal ribosomal protein uS15 family. As to quaternary structure, part of the 30S ribosomal subunit. Forms a bridge to the 50S subunit in the 70S ribosome, contacting the 23S rRNA.

In terms of biological role, one of the primary rRNA binding proteins, it binds directly to 16S rRNA where it helps nucleate assembly of the platform of the 30S subunit by binding and bridging several RNA helices of the 16S rRNA. Functionally, forms an intersubunit bridge (bridge B4) with the 23S rRNA of the 50S subunit in the ribosome. In Synechococcus elongatus (strain ATCC 33912 / PCC 7942 / FACHB-805) (Anacystis nidulans R2), this protein is Small ribosomal subunit protein uS15.